We begin with the raw amino-acid sequence, 106 residues long: Iron-sulfur cluster assembly protein CyaY (106 aa).

It belongs to the frataxin family.

Involved in iron-sulfur (Fe-S) cluster assembly. May act as a regulator of Fe-S biogenesis. In Escherichia fergusonii (strain ATCC 35469 / DSM 13698 / CCUG 18766 / IAM 14443 / JCM 21226 / LMG 7866 / NBRC 102419 / NCTC 12128 / CDC 0568-73), this protein is Iron-sulfur cluster assembly protein CyaY.